A 380-amino-acid chain; its full sequence is Kappa-type opioid receptor (380 aa).

The Extracellular portion of the chain corresponds to 1-57; it reads MESPIQIFRGEPGPTCAPSACLLPNSSSWFPNWAESDSNGSVGSEDQQLEPAHISPA. N-linked (GlcNAc...) asparagine glycosylation is found at Asn25 and Asn39. A helical membrane pass occupies residues 58–85; the sequence is IPVIITAVYSVVFVVGLVGNSLVMFVII. The Cytoplasmic portion of the chain corresponds to 86-95; sequence RYTKMKTATN. Residues 96–119 traverse the membrane as a helical segment; it reads IYIFNLALADALVTTTMPFQSAVY. The Extracellular segment spans residues 120-132; the sequence is LMNSWPFGDVLCK. A disulfide bridge links Cys131 with Cys210. Residues 133–154 traverse the membrane as a helical segment; that stretch reads IVISIDYYNMFTSIFTLTMMSV. At 155 to 173 the chain is on the cytoplasmic side; sequence DRYIAVCHPVKALDFRTPL. The chain crosses the membrane as a helical span at residues 174–196; it reads KAKIINICIWLLASSVGISAIVL. Topologically, residues 197–222 are extracellular; that stretch reads GGTKVREDVDVIECSLQFPDDEYSWW. A helical membrane pass occupies residues 223–247; sequence DLFMKICVFVFAFVIPVLIIIVCYT. Residues 248–274 are Cytoplasmic-facing; the sequence is LMILRLKSVRLLSGSREKDRNLRRITK. A helical membrane pass occupies residues 275 to 296; it reads LVLVVVAVFIICWTPIHIFILV. The Extracellular portion of the chain corresponds to 297-311; it reads EALGSTSHSTAVLSS. The chain crosses the membrane as a helical span at residues 312 to 333; the sequence is YYFCIALGYTNSSLNPVLYAFL. Residues 334-380 lie on the Cytoplasmic side of the membrane; the sequence is DENFKRCFRDFCFPIKMRMERQSTNRVRNTVQDPASMRDVGGMNKPV. Cys345 carries the S-palmitoyl cysteine lipid modification.

It belongs to the G-protein coupled receptor 1 family. Interacts with NHERF1. Interacts with GABARAPL1.

The protein resides in the cell membrane. In terms of biological role, G-protein coupled opioid receptor that functions as a receptor for endogenous alpha-neoendorphins and dynorphins, but has low affinity for beta-endorphins. Also functions as a receptor for various synthetic opioids and for the psychoactive diterpene salvinorin A. Ligand binding causes a conformation change that triggers signaling via guanine nucleotide-binding proteins (G proteins) and modulates the activity of down-stream effectors, such as adenylate cyclase. Signaling leads to the inhibition of adenylate cyclase activity. Inhibits neurotransmitter release by reducing calcium ion currents and increasing potassium ion conductance. Plays a role in the perception of pain. Plays a role in mediating reduced physical activity upon treatment with synthetic opioids. Plays a role in the regulation of salivation in response to synthetic opioids. May play a role in arousal and regulation of autonomic and neuroendocrine functions. This chain is Kappa-type opioid receptor (Oprk1), found in Rattus norvegicus (Rat).